We begin with the raw amino-acid sequence, 230 residues long: Protein FAM3A (230 aa).

The first 33 residues, 1–33, serve as a signal peptide directing secretion; sequence MRLAGPLRIVALVVSVGLTWIVVSILLGGPGSG. 2 disulfide bridges follow: cysteine 59/cysteine 87 and cysteine 65/cysteine 222. Residues 68–226 form the GG-type lectin domain; it reads EHLAFRVVSG…LEMEGCIPRR (159 aa).

This sequence belongs to the FAM3 family.

The protein resides in the secreted. This chain is Protein FAM3A (FAM3A), found in Pongo abelii (Sumatran orangutan).